The following is a 454-amino-acid chain: DNA repair protein RadA (454 aa).

Residues cysteine 11–cysteine 28 form a C4-type zinc finger. Glycine 94–serine 101 provides a ligand contact to ATP. Positions lysine 251–glycine 255 match the RadA KNRFG motif motif. Residues aspartate 350–glutamine 454 are lon-protease-like.

The protein belongs to the RecA family. RadA subfamily.

DNA-dependent ATPase involved in processing of recombination intermediates, plays a role in repairing DNA breaks. Stimulates the branch migration of RecA-mediated strand transfer reactions, allowing the 3' invading strand to extend heteroduplex DNA faster. Binds ssDNA in the presence of ADP but not other nucleotides, has ATPase activity that is stimulated by ssDNA and various branched DNA structures, but inhibited by SSB. Does not have RecA's homology-searching function. This chain is DNA repair protein RadA, found in Chlamydia trachomatis serovar D (strain ATCC VR-885 / DSM 19411 / UW-3/Cx).